The following is a 206-amino-acid chain: FMN-dependent NADH:quinone oxidoreductase (206 aa).

FMN-binding positions include 15–17, 94–97, and 138–141; these read SVS, MYNF, and TRGG.

This sequence belongs to the azoreductase type 1 family. In terms of assembly, homodimer. It depends on FMN as a cofactor.

The enzyme catalyses 2 a quinone + NADH + H(+) = 2 a 1,4-benzosemiquinone + NAD(+). The catalysed reaction is N,N-dimethyl-1,4-phenylenediamine + anthranilate + 2 NAD(+) = 2-(4-dimethylaminophenyl)diazenylbenzoate + 2 NADH + 2 H(+). Functionally, quinone reductase that provides resistance to thiol-specific stress caused by electrophilic quinones. Its function is as follows. Also exhibits azoreductase activity. Catalyzes the reductive cleavage of the azo bond in aromatic azo compounds to the corresponding amines. In Sinorhizobium fredii (strain NBRC 101917 / NGR234), this protein is FMN-dependent NADH:quinone oxidoreductase.